The following is a 194-amino-acid chain: Probable thymidylate kinase (194 aa).

Gly7–Thr14 is an ATP binding site.

It belongs to the thymidylate kinase family.

The enzyme catalyses dTMP + ATP = dTDP + ADP. The polypeptide is Probable thymidylate kinase (tmk) (Methanothermobacter thermautotrophicus (strain ATCC 29096 / DSM 1053 / JCM 10044 / NBRC 100330 / Delta H) (Methanobacterium thermoautotrophicum)).